The chain runs to 576 residues: MNIQALLSEKVSHAMIAVGAPADCEPQVRQSAKAQFGDYQANGMMAVAKKMGMPPRQLAEKVLEQLDLSGIAAKVEIAGPGFINIFLAQEWLSAQIDGVLTAPKLGVAPVAPKTVVIDYSAPNVAKEMHVGHVRSTIIGDAAARTLEFLGHKVIRANHVGDWGTQFGMLIAFLEKQQSEHHEAIALADLEAFYREAKRTYDEDPAFAERARGYVVKLQGGDEYCRKMWKQLVDVTMTQNQLIYDRMNVTLTRDDVMGESLYNDMLPGIVADLKAKGLAVESEGATVVFLDEYKNKEGEPMGVIIRKKDGGYLYTTTDIACAKYRYETLKADRVLYYIDSRQHQHLMQAWTIVRKAGYVPDSIPLEHHMFGMMLGKDGKPFKTRAGGTIKLSDLLDEAVDRATKLVAEKNPDMPADELNALANIVGIGAVKYADLSKSRTTDYIFDWDNMLAFEGNTAPYMQYAYTRVLSVFRKAGIDAEAVSGVTRIVDDREAALAVRLLQFEETITQVARDGMPHVMCAYLYDLAGLFSGFYEHCPILNAEDEATKQSRLRLALLTAKTLKQGLDTLGIETVERM.

The 'HIGH' region motif lies at 122–132 (PNVAKEMHVGH).

Belongs to the class-I aminoacyl-tRNA synthetase family. Monomer.

It is found in the cytoplasm. It carries out the reaction tRNA(Arg) + L-arginine + ATP = L-arginyl-tRNA(Arg) + AMP + diphosphate. In Erwinia tasmaniensis (strain DSM 17950 / CFBP 7177 / CIP 109463 / NCPPB 4357 / Et1/99), this protein is Arginine--tRNA ligase.